A 320-amino-acid polypeptide reads, in one-letter code: tRNA (guanine(10)-N2)-dimethyltransferase (320 aa).

One can recognise a THUMP domain in the interval 46–136 (EKFFERLAYT…DDKCYVGLLE (91 aa)).

The protein belongs to the methyltransferase superfamily. Trm-G10 family. As to quaternary structure, monomer.

Its subcellular location is the cytoplasm. It carries out the reaction guanosine(10) in tRNA + 2 S-adenosyl-L-methionine = N(2)-dimethylguanosine(10) in tRNA + 2 S-adenosyl-L-homocysteine + 2 H(+). Functionally, catalyzes the adenosylmethionine-dependent methylation of the exocyclic amino group (N(2)) of guanosine at position 10 of various tRNAs. Acts via a two-step process that leads to the formation of either N(2)-monomethyl (m(2)G) or N(2)-dimethylguanosine (m(2)(2)G). This Archaeoglobus fulgidus (strain ATCC 49558 / DSM 4304 / JCM 9628 / NBRC 100126 / VC-16) protein is tRNA (guanine(10)-N2)-dimethyltransferase (trmG10).